Reading from the N-terminus, the 404-residue chain is Exodeoxyribonuclease 7 large subunit (404 aa).

It belongs to the XseA family. Heterooligomer composed of large and small subunits.

The protein localises to the cytoplasm. It catalyses the reaction Exonucleolytic cleavage in either 5'- to 3'- or 3'- to 5'-direction to yield nucleoside 5'-phosphates.. Its function is as follows. Bidirectionally degrades single-stranded DNA into large acid-insoluble oligonucleotides, which are then degraded further into small acid-soluble oligonucleotides. The sequence is that of Exodeoxyribonuclease 7 large subunit from Ruminiclostridium cellulolyticum (strain ATCC 35319 / DSM 5812 / JCM 6584 / H10) (Clostridium cellulolyticum).